Consider the following 41-residue polypeptide: Large ribosomal subunit protein bL36 (41 aa).

The protein belongs to the bacterial ribosomal protein bL36 family.

In Erythrobacter litoralis (strain HTCC2594), this protein is Large ribosomal subunit protein bL36.